The sequence spans 438 residues: Putative formin-like protein 21a (438 aa).

Residues 1–74 form a disordered region; it reads MSPVEISGAD…RVLPRPPPPP (74 aa). Residues 22-61 are compositionally biased toward pro residues; that stretch reads PLPPPPPPPPPPMRRRAPLPPPPPPPMRRRAPLPPPPPPA. The 315-residue stretch at 124–438 folds into the FH2 domain; the sequence is FPCPSKKKSS…SYGYFDQPWI (315 aa).

The protein belongs to the formin-like family. Class-II subfamily.

The chain is Putative formin-like protein 21a (FH21A) from Arabidopsis thaliana (Mouse-ear cress).